The sequence spans 310 residues: 4-diphosphocytidyl-2-C-methyl-D-erythritol kinase (310 aa).

Lys20 is an active-site residue. ATP is bound at residue Pro106 to Ser116. Residue Asp148 is part of the active site.

This sequence belongs to the GHMP kinase family. IspE subfamily. As to quaternary structure, homodimer.

It carries out the reaction 4-CDP-2-C-methyl-D-erythritol + ATP = 4-CDP-2-C-methyl-D-erythritol 2-phosphate + ADP + H(+). Its pathway is isoprenoid biosynthesis; isopentenyl diphosphate biosynthesis via DXP pathway; isopentenyl diphosphate from 1-deoxy-D-xylulose 5-phosphate: step 3/6. In terms of biological role, catalyzes the phosphorylation of the position 2 hydroxy group of 4-diphosphocytidyl-2C-methyl-D-erythritol. The sequence is that of 4-diphosphocytidyl-2-C-methyl-D-erythritol kinase from Yersinia pseudotuberculosis serotype O:3 (strain YPIII).